Consider the following 432-residue polypeptide: Adenylosuccinate synthetase (432 aa).

GTP-binding positions include Gly13 to Lys19 and Gly41 to Thr43. The Proton acceptor role is filled by Asp14. Mg(2+)-binding residues include Asp14 and Gly41. IMP is bound by residues Asp14–Lys17, Asn39–His42, Thr130, Arg144, Gln225, Thr240, and Arg304. The active-site Proton donor is the His42. Ala300–Arg306 serves as a coordination point for substrate. GTP is bound by residues Arg306, Lys332–Asp334, and Ser415–Gly417.

This sequence belongs to the adenylosuccinate synthetase family. Homodimer. Mg(2+) is required as a cofactor.

It localises to the cytoplasm. The catalysed reaction is IMP + L-aspartate + GTP = N(6)-(1,2-dicarboxyethyl)-AMP + GDP + phosphate + 2 H(+). The protein operates within purine metabolism; AMP biosynthesis via de novo pathway; AMP from IMP: step 1/2. Plays an important role in the de novo pathway of purine nucleotide biosynthesis. Catalyzes the first committed step in the biosynthesis of AMP from IMP. This chain is Adenylosuccinate synthetase, found in Glaesserella parasuis serovar 5 (strain SH0165) (Haemophilus parasuis).